A 208-amino-acid chain; its full sequence is Flavin-dependent thymidylate synthase (208 aa).

A ThyX domain is found at 1-208 (MEVICKHYTP…QYLFEDCLKH (208 aa)). FAD contacts are provided by residues Ser-50 and 74–76 (RHR). DUMP is bound by residues 71 to 74 (ELSR), 84 to 86 (SSR), and Lys-147. The short motif at 74-84 (RHRIASLSVKS) is the ThyX motif element. Residues 163 to 165 (NAR) and Asn-169 contribute to the FAD site. Arg-174 contributes to the dUMP binding site. The active-site Involved in ionization of N3 of dUMP, leading to its activation is Arg-174.

Belongs to the thymidylate synthase ThyX family. As to quaternary structure, homotetramer. FAD serves as cofactor.

It catalyses the reaction dUMP + (6R)-5,10-methylene-5,6,7,8-tetrahydrofolate + NADPH + H(+) = dTMP + (6S)-5,6,7,8-tetrahydrofolate + NADP(+). It functions in the pathway pyrimidine metabolism; dTTP biosynthesis. Its function is as follows. Catalyzes the reductive methylation of 2'-deoxyuridine-5'-monophosphate (dUMP) to 2'-deoxythymidine-5'-monophosphate (dTMP) while utilizing 5,10-methylenetetrahydrofolate (mTHF) as the methyl donor, and NADPH and FADH(2) as the reductant. The sequence is that of Flavin-dependent thymidylate synthase from Helicobacter pylori (strain J99 / ATCC 700824) (Campylobacter pylori J99).